A 535-amino-acid polypeptide reads, in one-letter code: Pyrichalasin C-18 hydroxylase (535 aa).

A helical transmembrane segment spans residues 42–62 (LPSGTLIVLAALSLALLVAVL). N-linked (GlcNAc...) asparagine glycosylation is found at asparagine 139 and asparagine 222. Cysteine 479 lines the heme pocket.

It belongs to the cytochrome P450 family. Requires heme as cofactor.

It is found in the membrane. It functions in the pathway mycotoxin biosynthesis. Its function is as follows. Cytochrome P450 monooxygenase; part of the gene cluster that mediates the biosynthesis of the mycotoxin pyrichalasin H, a tyrosine-derived cytochalasan that inhibits the growth of rice seedlings, but also inhibits lymphocyte capping and actin polymerization and alters cell morphology. Pyrichalasin H is indicated as the responsible agent for the genus-specific pathogenicity of M.grisea toward crabgrass. The first step in the pathway is catalyzed by the O-methyltransferase pyiA which methylates free tyrosine to generate the precursor O-methyltyrosine. The hybrid PKS-NRPS pyiS, assisted by the enoyl reductase pyiC, are responsible for fusion of the O-methyltyrosine precursor and the polyketide backbone. The polyketide synthase module (PKS) of pyiS is responsible for the synthesis of the polyketide backbone and the downstream nonribosomal peptide synthetase (NRPS) amidates the carboxyl end of the polyketide with the O-methyltyrosine precursor. As the NRPS A-domain demonstrates substrate tolerance, pyiS can also use phenylalanine, tyrosine and even para-chlorophenylalanine as amino acid precursor, which leads to the production of novel cytochalasans, including halogenated cytochalasans. Because pyiS lacks a designated enoylreductase (ER) domain, the required activity is provided the enoyl reductase pyiC. Reduction by the hydrolyase pyiE leads to 1,5-dihydropyrrolone, which is substrate for dehydration and intra-molecular Diels-Alder cyclization by the Diels-Alderase pyiF to yield the required isoindolone-fused macrocycle. The tailoring cytochrome P450 monooxygenases piyD and piyG catalyze the hydroxylation at C-18 and C-7, respectivily, whereas the short-chain dehydrogenase/reductase pyiH reduces the carbonyl at C-21 in preparation for the transfer of an acetyl group by the acetyltransferase pyiB. These 3 reactions whose order is not clear yet, lead to the production of O-methylpyrichalasin J, a deacetylated pyrichalasin H. Finally, pyiB to converts O-methylpyrichalasin J into the final product pyrichalasin H via acetylation of C-21. This chain is Pyrichalasin C-18 hydroxylase, found in Pyricularia grisea (Crabgrass-specific blast fungus).